Reading from the N-terminus, the 340-residue chain is Phenylalanine--tRNA ligase alpha subunit (340 aa).

Glu-255 is a binding site for Mg(2+).

It belongs to the class-II aminoacyl-tRNA synthetase family. Phe-tRNA synthetase alpha subunit type 1 subfamily. As to quaternary structure, tetramer of two alpha and two beta subunits. The cofactor is Mg(2+).

The protein resides in the cytoplasm. It catalyses the reaction tRNA(Phe) + L-phenylalanine + ATP = L-phenylalanyl-tRNA(Phe) + AMP + diphosphate + H(+). In Desulfitobacterium hafniense (strain DSM 10664 / DCB-2), this protein is Phenylalanine--tRNA ligase alpha subunit.